We begin with the raw amino-acid sequence, 236 residues long: Demethylmenaquinone methyltransferase (236 aa).

Residues Thr58, Asp79, and 106–107 (NA) contribute to the S-adenosyl-L-methionine site.

This sequence belongs to the class I-like SAM-binding methyltransferase superfamily. MenG/UbiE family.

It catalyses the reaction a 2-demethylmenaquinol + S-adenosyl-L-methionine = a menaquinol + S-adenosyl-L-homocysteine + H(+). It functions in the pathway quinol/quinone metabolism; menaquinone biosynthesis; menaquinol from 1,4-dihydroxy-2-naphthoate: step 2/2. Its function is as follows. Methyltransferase required for the conversion of demethylmenaquinol (DMKH2) to menaquinol (MKH2). The protein is Demethylmenaquinone methyltransferase of Listeria welshimeri serovar 6b (strain ATCC 35897 / DSM 20650 / CCUG 15529 / CIP 8149 / NCTC 11857 / SLCC 5334 / V8).